The primary structure comprises 514 residues: 2,3-bisphosphoglycerate-independent phosphoglycerate mutase (514 aa).

Positions 14 and 64 each coordinate Mn(2+). Ser-64 serves as the catalytic Phosphoserine intermediate. Substrate-binding positions include His-125, 155–156, Arg-187, Arg-193, 263–266, and Lys-337; these read RD and RADR. 5 residues coordinate Mn(2+): Asp-404, His-408, Asp-445, His-446, and His-464.

This sequence belongs to the BPG-independent phosphoglycerate mutase family. As to quaternary structure, monomer. It depends on Mn(2+) as a cofactor.

It catalyses the reaction (2R)-2-phosphoglycerate = (2R)-3-phosphoglycerate. It participates in carbohydrate degradation; glycolysis; pyruvate from D-glyceraldehyde 3-phosphate: step 3/5. In terms of biological role, catalyzes the interconversion of 2-phosphoglycerate and 3-phosphoglycerate. The sequence is that of 2,3-bisphosphoglycerate-independent phosphoglycerate mutase from Pseudoalteromonas translucida (strain TAC 125).